We begin with the raw amino-acid sequence, 252 residues long: Chaperone protein AggD (252 aa).

Residues 1–22 (MKIRRIVSTIAIALSVFTFAHA) form the signal peptide.

This sequence belongs to the periplasmic pilus chaperone family.

It localises to the periplasm. Functionally, involved in the biogenesis of the AAF/I fimbriae. This is Chaperone protein AggD (aggD) from Escherichia coli.